The chain runs to 269 residues: uncharacterized protein (269 aa).

Positions 1-16 are enriched in pro residues; the sequence is MTDVPSKPPQTTPPPK. 2 disordered regions span residues 1–110 and 157–269; these read MTDV…TISG and ILQQ…PTIQ. Residues 21 to 45 are compositionally biased toward polar residues; the sequence is APTTIFSSPPQLPDRSSLNISHTAS. The span at 46-58 shows a compositional bias: low complexity; that stretch reads TPTLTPTPLQQQQ. The segment covering 80–93 has biased composition (polar residues); the sequence is SFSNSPNRQTQSFI. Low complexity predominate over residues 159 to 181; the sequence is QQPQQSHSPQQQQQQHTPNHQQP. Positions 182-195 are enriched in polar residues; sequence LSPQQQKDLAQKRS. Residues 198 to 213 show a composition bias toward pro residues; that stretch reads PLPPRPNKNRPLPTPI.

This is an uncharacterized protein from Dictyostelium discoideum (Social amoeba).